Here is a 213-residue protein sequence, read N- to C-terminus: Small ribosomal subunit protein eS1 (213 aa).

A disordered region spans residues 189–213 (ARPEEVAAEEETAVDVDEEDVDVEA). The span at 194–213 (VAAEEETAVDVDEEDVDVEA) shows a compositional bias: acidic residues.

The protein belongs to the eukaryotic ribosomal protein eS1 family.

The sequence is that of Small ribosomal subunit protein eS1 from Haloarcula marismortui (strain ATCC 43049 / DSM 3752 / JCM 8966 / VKM B-1809) (Halobacterium marismortui).